Consider the following 274-residue polypeptide: Bis(5'-nucleosyl)-tetraphosphatase, symmetrical (274 aa).

Belongs to the Ap4A hydrolase family.

The enzyme catalyses P(1),P(4)-bis(5'-adenosyl) tetraphosphate + H2O = 2 ADP + 2 H(+). In terms of biological role, hydrolyzes diadenosine 5',5'''-P1,P4-tetraphosphate to yield ADP. The polypeptide is Bis(5'-nucleosyl)-tetraphosphatase, symmetrical (Erwinia tasmaniensis (strain DSM 17950 / CFBP 7177 / CIP 109463 / NCPPB 4357 / Et1/99)).